Reading from the N-terminus, the 117-residue chain is Protein Wnt-6 (117 aa).

Residue Ser-1 is the site of O-palmitoleoyl serine; by PORCN attachment. An intrachain disulfide couples Cys-83 to Cys-98. Residue Asn-84 is glycosylated (N-linked (GlcNAc...) asparagine).

It belongs to the Wnt family. In terms of processing, palmitoleoylation is required for efficient binding to frizzled receptors. Depalmitoleoylation leads to Wnt signaling pathway inhibition.

The protein localises to the secreted. Its subcellular location is the extracellular space. It is found in the extracellular matrix. Functionally, ligand for members of the frizzled family of seven transmembrane receptors. Probable developmental protein. May be a signaling molecule which affects the development of discrete regions of tissues. Is likely to signal over only few cell diameters. The sequence is that of Protein Wnt-6 (wnt6) from Thunnus thynnus (Atlantic bluefin tuna).